Reading from the N-terminus, the 255-residue chain is Phosphoribosylaminoimidazole-succinocarboxamide synthase A (255 aa).

Belongs to the SAICAR synthetase family.

The catalysed reaction is 5-amino-1-(5-phospho-D-ribosyl)imidazole-4-carboxylate + L-aspartate + ATP = (2S)-2-[5-amino-1-(5-phospho-beta-D-ribosyl)imidazole-4-carboxamido]succinate + ADP + phosphate + 2 H(+). It participates in purine metabolism; IMP biosynthesis via de novo pathway; 5-amino-1-(5-phospho-D-ribosyl)imidazole-4-carboxamide from 5-amino-1-(5-phospho-D-ribosyl)imidazole-4-carboxylate: step 1/2. The sequence is that of Phosphoribosylaminoimidazole-succinocarboxamide synthase A (purC1) from Bradyrhizobium diazoefficiens (strain JCM 10833 / BCRC 13528 / IAM 13628 / NBRC 14792 / USDA 110).